Here is a 101-residue protein sequence, read N- to C-terminus: Small ribosomal subunit protein uS14 (101 aa).

Belongs to the universal ribosomal protein uS14 family. Part of the 30S ribosomal subunit. Contacts proteins S3 and S10.

Functionally, binds 16S rRNA, required for the assembly of 30S particles and may also be responsible for determining the conformation of the 16S rRNA at the A site. This is Small ribosomal subunit protein uS14 from Rhizorhabdus wittichii (strain DSM 6014 / CCUG 31198 / JCM 15750 / NBRC 105917 / EY 4224 / RW1) (Sphingomonas wittichii).